A 138-amino-acid chain; its full sequence is MHEWALADGIVRTAIEFARQHGKEKVLAMRISLGELQDVNQEILEFAINEIKKGTIAEEAELEFIIEEAEFKCRNCGNEWKLKDVKESFNETIKEDIHFIPEVVHAFLACPNCGSRDFEVTKGRGVYLAAIKVEGDDE.

Ni(2+) is bound at residue His2. Zn(2+) is bound by residues Cys73, Cys76, Cys110, and Cys113.

It belongs to the HypA/HybF family.

Involved in the maturation of [NiFe] hydrogenases. Required for nickel insertion into the metal center of the hydrogenase. This is Hydrogenase maturation factor HypA from Thermococcus sibiricus (strain DSM 12597 / MM 739).